Here is a 625-residue protein sequence, read N- to C-terminus: Sphingomyelin phosphodiesterase (625 aa).

The tract at residues 1–20 is disordered; sequence MPRHGVSPGQGLPRSGREQA. A signal peptide spans 1 to 40; sequence MPRHGVSPGQGLPRSGREQASDRSLGAPCLRLLWLGLALA. The Saposin B-type domain occupies 81-165; sequence WNLTCPTCKG…LLGSSCGHWD (85 aa). The N-linked (GlcNAc...) asparagine glycan is linked to Asn82. Disulfide bonds link Cys85/Cys161, Cys88/Cys153, and Cys116/Cys127. A glycan (N-linked (GlcNAc...) asparagine) is linked at Asn171. The Zn(2+) site is built by Asp202 and His204. 2 cysteine pairs are disulfide-bonded: Cys217-Cys222 and Cys223-Cys246. Zn(2+)-binding residues include Asp274 and Asn314. N-linked (GlcNAc...) asparagine glycosylation is found at Asn331 and Asn391. Cysteines 381 and 427 form a disulfide. Zn(2+)-binding residues include His421, His453, and His455. N-linked (GlcNAc...) asparagine glycosylation is present at Asn499. Ser504 is modified (phosphoserine). The N-linked (GlcNAc...) asparagine glycan is linked to Asn516. 2 disulfide bridges follow: Cys580–Cys584 and Cys590–Cys603.

Belongs to the acid sphingomyelinase family. Monomer. Interacts with SORT1; the interaction is required for SMPD1 targeting to lysosomes. The cofactor is Zn(2+). Post-translationally, proteolytically processed. Mature lysosomal form arises from C-terminal proteolytic processing of pro-sphingomyelin phosphodiesterase. Both lysosomal and secreted forms are glycosylated but they show a differential pattern of glycosylation. In terms of processing, phosphorylated at Ser-504 by PRKCD upon stress stimuli. Phosphorylation is required for secretion. Post-translationally, this form is generated following cleavage by CASP7 in the extracellular milieu. It shows increased activity.

It is found in the lysosome. It localises to the lipid droplet. The protein resides in the secreted. The protein localises to the extracellular space. The enzyme catalyses a sphingomyelin + H2O = phosphocholine + an N-acylsphing-4-enine + H(+). It catalyses the reaction N-(octadecanoyl)-sphing-4-enine-1-phosphocholine + H2O = N-octadecanoylsphing-4-enine + phosphocholine + H(+). The catalysed reaction is a 1,2-diacyl-sn-glycero-3-phosphocholine + H2O = phosphocholine + a 1,2-diacyl-sn-glycerol + H(+). It carries out the reaction 1,2-dihexadecanoyl-sn-glycero-3-phosphocholine + H2O = 1,2-dihexadecanoyl-sn-glycerol + phosphocholine + H(+). Hydrolysis of liposomal sphingomyelin is stimulated by incorporation of diacylglycerol (DAG), ceramide and free fatty acids into the liposomal membranes. Phosphatidylcholine hydrolysis is inhibited by incorporation of cholesterol, ceramide, DAG, monoacylglycerol and fatty acids. Its function is as follows. Converts sphingomyelin to ceramide. Exists as two enzymatic forms that arise from alternative trafficking of a single protein precursor, one that is targeted to the endolysosomal compartment, whereas the other is released extracellularly. However, in response to various forms of stress, lysosomal exocytosis may represent a major source of the secretory form. In the lysosomes, converts sphingomyelin to ceramide. Plays an important role in the export of cholesterol from the intraendolysosomal membranes. Also has phospholipase C activities toward 1,2-diacylglycerolphosphocholine and 1,2-diacylglycerolphosphoglycerol. Modulates stress-induced apoptosis through the production of ceramide. Functionally, when secreted, modulates cell signaling with its ability to reorganize the plasma membrane by converting sphingomyelin to ceramide. Secreted form is increased in response to stress and inflammatory mediators such as IL1B, IFNG or TNF as well as upon infection with bacteria and viruses. Produces the release of ceramide in the outer leaflet of the plasma membrane playing a central role in host defense. Ceramide reorganizes these rafts into larger signaling platforms that are required to internalize bacteria, induce apoptosis and regulate the cytokine response in infected cells. In wounded cells, the lysosomal form is released extracellularly in the presence of Ca(2+) and promotes endocytosis and plasma membrane repair. In terms of biological role, this form is generated following cleavage by CASP7 in the extracellular milieu in response to bacterial infection. It shows increased ability to convert sphingomyelin to ceramide and promotes plasma membrane repair. Plasma membrane repair by ceramide counteracts the action of gasdermin-D (GSDMD) perforin (PRF1) pores that are formed in response to bacterial infection. The chain is Sphingomyelin phosphodiesterase (SMPD1) from Bos taurus (Bovine).